The chain runs to 257 residues: Phosphonates import ATP-binding protein PhnC 1 (257 aa).

The 245-residue stretch at 2 to 246 folds into the ABC transporter domain; it reads LKITNLTKRY…EMDTIYAGVP (245 aa). 35–42 provides a ligand contact to ATP; that stretch reads GSSGAGKS.

It belongs to the ABC transporter superfamily. Phosphonates importer (TC 3.A.1.9.1) family. In terms of assembly, the complex is composed of two ATP-binding proteins (PhnC), two transmembrane proteins (PhnE) and a solute-binding protein (PhnD).

It is found in the cell inner membrane. The enzyme catalyses phosphonate(out) + ATP + H2O = phosphonate(in) + ADP + phosphate + H(+). In terms of biological role, part of the ABC transporter complex PhnCDE involved in phosphonates import. Responsible for energy coupling to the transport system. This chain is Phosphonates import ATP-binding protein PhnC 1, found in Ruegeria sp. (strain TM1040) (Silicibacter sp.).